The following is a 247-amino-acid chain: ATP synthase subunit a (247 aa).

6 helical membrane-spanning segments follow: residues 24 to 44 (IAFT…AAMM), 82 to 102 (FFPL…VGII), 112 to 132 (IIVT…YGFY), 141 to 161 (LFVP…IEII), 181 to 201 (GHVT…LGFV), and 206 to 226 (ALLP…VAFL).

It belongs to the ATPase A chain family. F-type ATPases have 2 components, CF(1) - the catalytic core - and CF(0) - the membrane proton channel. CF(1) has five subunits: alpha(3), beta(3), gamma(1), delta(1), epsilon(1). CF(0) has four main subunits: a, b, b' and c.

It is found in the cell inner membrane. In terms of biological role, key component of the proton channel; it plays a direct role in the translocation of protons across the membrane. The protein is ATP synthase subunit a of Bradyrhizobium sp. (strain ORS 278).